The sequence spans 51 residues: Insulin-1 (51 aa).

Disulfide bonds link cysteine 8–cysteine 37, cysteine 20–cysteine 50, and cysteine 36–cysteine 41.

This sequence belongs to the insulin family. Heterodimer of a B chain and an A chain linked by two disulfide bonds.

It is found in the secreted. Its function is as follows. Insulin decreases blood glucose concentration. It increases cell permeability to monosaccharides, amino acids and fatty acids. It accelerates glycolysis, the pentose phosphate cycle, and glycogen synthesis in liver. The chain is Insulin-1 (ins1) from Batrachoididae sp. (Toadfish).